A 151-amino-acid chain; its full sequence is Probable cellulase Cel12b (151 aa).

Catalysis depends on residues E50 and E133.

It belongs to the glycosyl hydrolase 12 (cellulase H) family.

Probable cellulase. Can hydrolyze barley beta-glucan in vitro. Could be important for the survival of M.tuberculosis in the environment, perhaps in amoebal hosts. The polypeptide is Probable cellulase Cel12b (Mycobacterium tuberculosis (strain ATCC 25618 / H37Rv)).